Here is an 822-residue protein sequence, read N- to C-terminus: Molybdenum cofactor sulfurase (822 aa).

The residue at position 239 (Lys239) is an N6-(pyridoxal phosphate)lysine. Residue Cys401 is part of the active site. The tract at residues Thr633 to Pro666 is disordered. The 178-residue stretch at Arg643 to Gln820 folds into the MOSC domain.

The protein belongs to the class-V pyridoxal-phosphate-dependent aminotransferase family. MOCOS subfamily. It depends on pyridoxal 5'-phosphate as a cofactor.

It carries out the reaction Mo-molybdopterin + L-cysteine + AH2 = thio-Mo-molybdopterin + L-alanine + A + H2O. It functions in the pathway cofactor biosynthesis; molybdopterin biosynthesis. Its function is as follows. Sulfurates the molybdenum cofactor. Sulfation of molybdenum is essential for xanthine dehydrogenase (XDH) and aldehyde oxidase (ADO) enzymes in which molybdenum cofactor is liganded by 1 oxygen and 1 sulfur atom in active form. The chain is Molybdenum cofactor sulfurase from Aspergillus oryzae (strain ATCC 42149 / RIB 40) (Yellow koji mold).